A 493-amino-acid polypeptide reads, in one-letter code: Transcript termination protein A18 (493 aa).

A Helicase ATP-binding domain is found at 100 to 256; that stretch reads MIESKRPLYI…NSIINIAKLS (157 aa). Position 113 to 120 (113 to 120) interacts with ATP; that stretch reads LACGFGKT. A DESH box motif is present at residues 206–209; it reads DESH.

Belongs to the helicase family. Poxviruses subfamily. In terms of assembly, interacts with G2. Might be part of a transcription complex composed at least of G2, A18, and H5.

Its subcellular location is the virion. In terms of biological role, DNA helicase which seems to act as a postreplicative transcription termination factor. Involved in ATP-dependent release of nascent RNA. Forms a stable complex with single-stranded DNA, and to a lesser extent RNA. This Homo sapiens (Human) protein is Transcript termination protein A18.